Consider the following 154-residue polypeptide: uncharacterized protein (154 aa).

The disordered stretch occupies residues 91–154 (PSEESWGCRQ…WGSPQPSRGA (64 aa)). The span at 134-154 (SRDTSPLGGQSWGSPQPSRGA) shows a compositional bias: polar residues.

This is an uncharacterized protein from Homo sapiens (Human).